A 202-amino-acid polypeptide reads, in one-letter code: ATP-dependent Clp protease proteolytic subunit (202 aa).

Ser98 (nucleophile) is an active-site residue. His123 is a catalytic residue.

It belongs to the peptidase S14 family. In terms of assembly, fourteen ClpP subunits assemble into 2 heptameric rings which stack back to back to give a disk-like structure with a central cavity, resembling the structure of eukaryotic proteasomes.

It is found in the cytoplasm. It carries out the reaction Hydrolysis of proteins to small peptides in the presence of ATP and magnesium. alpha-casein is the usual test substrate. In the absence of ATP, only oligopeptides shorter than five residues are hydrolyzed (such as succinyl-Leu-Tyr-|-NHMec, and Leu-Tyr-Leu-|-Tyr-Trp, in which cleavage of the -Tyr-|-Leu- and -Tyr-|-Trp bonds also occurs).. Its function is as follows. Cleaves peptides in various proteins in a process that requires ATP hydrolysis. Has a chymotrypsin-like activity. Plays a major role in the degradation of misfolded proteins. This is ATP-dependent Clp protease proteolytic subunit from Magnetococcus marinus (strain ATCC BAA-1437 / JCM 17883 / MC-1).